A 351-amino-acid polypeptide reads, in one-letter code: Cytoplasmic dynein 2 light intermediate chain 1 (351 aa).

Positions 303 to 335 (GTLKAVQDPARDPQYAESEVDEMRVQKDQELEH) are disordered. Residues 323–335 (DEMRVQKDQELEH) are compositionally biased toward basic and acidic residues.

This sequence belongs to the dynein light intermediate chain family. As to quaternary structure, light intermediate chain of the cytoplasmic dynein complex 2, a multisubunit complex composed at least of eleven different proteins. The cytoplasmic dynein 2 complex consists of two catalytic heavy chains (HCs) and a number of non-catalytic subunits presented by intermediate chains (ICs), light intermediate chains (LICs) and light chains (LCs). Among them, a heavy chain (DYNC2H1), two intermediate chains (DYNC2I2 and DYNC2I1), a light intermediate chain (DYNC2LI1), and a light chain (DYNLT2B) are unique to the dynein-2 complex, but a subset of light chains are also shared by dynein-1 and dynein-2 complexes. Dynein-2 complex is built around two copies of cytoplasmic dynein 2 heavy chain 1 (DYNC2H1). The C-terminal region forms the motor domain, which converts the energy from ATP hydrolysis into movement. Its N-terminal region forms the tail, an extended structure that binds the other subunits and holds the two heavy chains in a homodimer. Interacts with DYNC2H1 (via N-terminus); this interaction stabilizes the dynein-2 complex structure. As to expression, specifically expressed by ciliated cells in brain, lung, spleen, testis and kidney (at protein level). Enriched in the ependymal layer lining the lateral ventricles (at protein level).

Its subcellular location is the cytoplasm. It localises to the cell projection. The protein localises to the cilium. It is found in the cytoskeleton. The protein resides in the cilium basal body. Its subcellular location is the cilium axoneme. It localises to the microtubule organizing center. The protein localises to the centrosome. Acts as one of several non-catalytic accessory components of the cytoplasmic dynein 2 complex (dynein-2 complex), a motor protein complex that drives the movement of cargos along microtubules within cilia and flagella in concert with the intraflagellar transport (IFT) system, facilitating the assembly of these organelles. Involved in the regulation of ciliary length. This chain is Cytoplasmic dynein 2 light intermediate chain 1 (Dync2li1), found in Mus musculus (Mouse).